The following is a 354-amino-acid chain: Methionine aminotransferase BCAT4 (354 aa).

An N6-(pyridoxal phosphate)lysine modification is found at Lys-198.

Belongs to the class-IV pyridoxal-phosphate-dependent aminotransferase family. It depends on pyridoxal 5'-phosphate as a cofactor. As to expression, mostly expressed in phloem.

It localises to the cytoplasm. It carries out the reaction a 2-oxocarboxylate + L-methionine = 4-methylsulfanyl-2-oxobutanoate + an L-alpha-amino acid. In terms of biological role, converts 2-oxo acids to branched-chain amino acids. Shows activity with L-Leu, L-Ile and L-Val as amino donors and alpha-keto-glutarate as an amino acceptor, but no activity for D-isomers of Leu, Ile, Val, Asp, Glu or Ala. Acts on methionine and its derivatives and the corresponding 2-oxo acids. Catalyzes the initial deamination of methionine to 4-methylthio-2-oxobutyrate as well as the transamination of other typical intermediates of the methionine chain elongation pathway. This chain is Methionine aminotransferase BCAT4 (BCAT4), found in Arabidopsis thaliana (Mouse-ear cress).